Reading from the N-terminus, the 391-residue chain is Phosphoglycerate kinase (391 aa).

Substrate-binding positions include 21–23 (DLN), R36, 59–62 (HLGR), R113, and R146. Residues K197, E319, and 345-348 (GGDT) each bind ATP.

The protein belongs to the phosphoglycerate kinase family. As to quaternary structure, monomer.

It localises to the cytoplasm. It carries out the reaction (2R)-3-phosphoglycerate + ATP = (2R)-3-phospho-glyceroyl phosphate + ADP. It functions in the pathway carbohydrate degradation; glycolysis; pyruvate from D-glyceraldehyde 3-phosphate: step 2/5. The chain is Phosphoglycerate kinase from Pseudoalteromonas atlantica (strain T6c / ATCC BAA-1087).